The following is a 363-amino-acid chain: MTNRIRVAVVFGGRSNEHAVSCVSAGSVLRHLDPTRYEAVPIGITPQGGWVLANSDVAAIGLSHEALPSVDAGGTALTLTADPTRGGELVALDDAGAVLGTVDVVFPILHGPFGEDGTLQGMLELAGVPYVGPGVLASAAGMDKEFTKKLLAAEGLPVGTQVVLRPGTATLTEEQRERLGLPVFVKPARAGSSIGITKVDDWAALDTAIAAAREHDPKVIVEAGIVGREVECGVLEFPDGRISASVLAEIRMPEGDGPQFYDFDTKYLDDVCEFDVPAKLDDDIAEQVRELAVRAFQALDCQGLARVDFFVTADGPVINEINTMPGFTSISMYPRMWEATGIDYGTLVSTLIETALARGTGLR.

The ATP-grasp domain occupies 148-353 (KKLLAAEGLP…YGTLVSTLIE (206 aa)). ATP is bound at residue 176 to 231 (RERLGLPVFVKPARAGSSIGITKVDDWAALDTAIAAAREHDPKVIVEAGIVGREVE). Mg(2+) is bound by residues Asp-308, Glu-320, and Asn-322.

Belongs to the D-alanine--D-alanine ligase family. The cofactor is Mg(2+). Mn(2+) serves as cofactor.

It is found in the cytoplasm. It carries out the reaction 2 D-alanine + ATP = D-alanyl-D-alanine + ADP + phosphate + H(+). Its pathway is cell wall biogenesis; peptidoglycan biosynthesis. Functionally, cell wall formation. The chain is D-alanine--D-alanine ligase from Nocardia farcinica (strain IFM 10152).